Consider the following 193-residue polypeptide: Ion-translocating oxidoreductase complex subunit A (193 aa).

Helical transmembrane passes span 5-25, 39-59, 63-83, 102-122, 134-154, and 171-191; these read LLLFVGTVLVNNFVLVKFLGL, MGMGLATTFVMTLASICAWLI, ILIPLNLIYLRTLAFILVIAV, LLGIFLPLITTNCAVLGVALL, ALYGFSAAVGFSLVMVLFAAI, and AIALITAGLMSLAFMGFSGLV.

This sequence belongs to the NqrDE/RnfAE family. As to quaternary structure, the complex is composed of six subunits: RsxA, RsxB, RsxC, RsxD, RsxE and RsxG.

The protein localises to the cell inner membrane. In terms of biological role, part of a membrane-bound complex that couples electron transfer with translocation of ions across the membrane. Required to maintain the reduced state of SoxR. This Shigella boydii serotype 18 (strain CDC 3083-94 / BS512) protein is Ion-translocating oxidoreductase complex subunit A.